A 670-amino-acid polypeptide reads, in one-letter code: Solute carrier organic anion transporter family member 1A1 (670 aa).

Over 1–20 the chain is Cytoplasmic; the sequence is MEETEKKVATQEGRFFSKMK. Residues 21–40 form a helical membrane-spanning segment; sequence VFLMSLTCAYLAKSLSGVYM. Over 41–59 the chain is Extracellular; it reads NSMLTQIERQFGIPTSVVG. The helical transmembrane segment at 60-80 threads the bilayer; it reads FITGSFEIGNLLLIVFVSYFG. Residues 81–86 are Cytoplasmic-facing; the sequence is RKLHRP. A helical membrane pass occupies residues 87–111; the sequence is IIIGVGCVVMGLGCFLMASPHFLMG. Residues 112 to 155 lie on the Extracellular side of the membrane; it reads RYKYETTISPTSNLSSNSFLCIENRTQTLKPTQDPTECVKEIKS. 2 N-linked (GlcNAc...) asparagine glycosylation sites follow: Asn-124 and Asn-135. The chain crosses the membrane as a helical span at residues 156 to 184; sequence LMWIYVLIGNTMRGIGETPIMPLGISYIE. The Cytoplasmic portion of the chain corresponds to 185–203; that stretch reads DFAKSENSPLYIGILEMGK. Residues 204–224 form a helical membrane-spanning segment; the sequence is IVGPIIGLLLGSFFARVYVDI. Residues 225 to 242 are Extracellular-facing; the sequence is GSVNTDDLTITPTDTRWV. Residues 243 to 267 traverse the membrane as a helical segment; it reads GAWWIGFLVCAGVNILTSIPFFFFP. Residues 268-311 lie on the Cytoplasmic side of the membrane; it reads KTLPKKELQDNVDVTKYEKVEKHRERAKKENLGITKDFLPFMKS. The chain crosses the membrane as a helical span at residues 312-333; it reads LCCNPIYMLFSLTSVLQINGFA. Residues 334–353 lie on the Extracellular side of the membrane; sequence STFTFLPKYLEQQYGKSTSE. The helical transmembrane segment at 354-377 threads the bilayer; sequence AVFLIGVYSLPPVCLGYLISGFIM. Residues 378 to 381 are Cytoplasmic-facing; sequence KKFK. Residues 382–405 form a helical membrane-spanning segment; the sequence is ITVKKAAYIAFGLSLSEYFIFLCN. Topologically, residues 406–513 are extracellular; that stretch reads YLLTCDNFPV…PECDNKLQYF (108 aa). Residues 433-488 enclose the Kazal-like domain; it reads KNVLADCNTRCSCLTDTWDPVCGDNGLAYMSACLAGCEKSVGTGTNMVFQNCSCIG. Cystine bridges form between Cys-439-Cys-469, Cys-445-Cys-465, and Cys-454-Cys-486. 2 N-linked (GlcNAc...) asparagine glycosylation sites follow: Asn-483 and Asn-492. Residues 514–536 form a helical membrane-spanning segment; sequence LIKSVFSSFIFSLAAIPGYMVLL. At 537-545 the chain is on the cytoplasmic side; sequence RCVKSEEKS. The chain crosses the membrane as a helical span at residues 546-571; sequence IGVGLHAFFIRLLAGIPAPVYFGALI. Residues 572 to 605 are Extracellular-facing; that stretch reads DRTCLHWGTLKCGQPGACRMYDINRFRHIYLGLP. The helical transmembrane segment at 606–623 threads the bilayer; it reads AAVRGSSFLPAVFILILM. At 624-670 the chain is on the cytoplasmic side; the sequence is RKFHFPGDIHSPDTELAEMKLTEKESECTDVCRSPKVENDGELKTKL. Ser-634 is modified (phosphoserine).

The protein belongs to the organo anion transporter (TC 2.A.60) family. In terms of assembly, binds to PDZK1. Interaction with PDZK1 is required for expression on hepatocyte surface. As to expression, highly expressed in liver, and at lower levels in kidney. Not detected in other tissues.

The protein localises to the basolateral cell membrane. The catalysed reaction is estrone 3-sulfate(out) + hydrogencarbonate(in) = estrone 3-sulfate(in) + hydrogencarbonate(out). The enzyme catalyses taurocholate(out) + hydrogencarbonate(in) = taurocholate(in) + hydrogencarbonate(out). It catalyses the reaction L-thyroxine(out) = L-thyroxine(in). It carries out the reaction prostaglandin E2(out) = prostaglandin E2(in). The catalysed reaction is 17beta-estradiol 17-O-(beta-D-glucuronate)(out) = 17beta-estradiol 17-O-(beta-D-glucuronate)(in). The enzyme catalyses dehydroepiandrosterone 3-sulfate(out) = dehydroepiandrosterone 3-sulfate(in). Functionally, mediates the Na(+)-independent transport of organic anions such as steroid sulfate conjugates (dehydroepiandrosterone sulfate (DHEAS), 17-beta-glucuronosyl estradiol, estrone-3-sulfate), conjugated (taurocholate) and unconjugated (cholate) bile acids, prostaglandin E2 (PGE2) and L-thyroxine T4. Also capable of transporting sulfobromophthalein (BSP), ouabain and gadoxetate. Hydrogencarbonate/HCO3(-) acts as the probable counteranion that exchanges for organic anions. Shows a pH-sensitive substrate specificity which may be ascribed to the protonation state of the binding site and leads to a stimulation of substrate transport in an acidic microenvironment. This is Solute carrier organic anion transporter family member 1A1 from Mus musculus (Mouse).